Consider the following 395-residue polypeptide: Zinc-regulated GTPase metalloprotein activator 1A (395 aa).

Residues 1-22 are disordered; it reads MLPAVGSADEEEDPAEEDCPEL. The segment covering 8 to 20 has biased composition (acidic residues); that stretch reads ADEEEDPAEEDCP. Residues 17 to 24 carry the psi-PxLVp motif motif; sequence EDCPELVP. 49 to 56 serves as a coordination point for GTP; the sequence is GYLGAGKT. Residues Cys107, Cys109, and Cys110 each coordinate Zn(2+). The CXCC motif motif lies at 107–110; it reads CLCC. GTP-binding positions include 110–114 and 203–206; these read CSVKD and NKTD. Residues 274–377 form the CobW C-terminal domain; it reads IVTITFEVPG…ILKQLFIATV (104 aa).

The protein belongs to the SIMIBI class G3E GTPase family. ZNG1 subfamily. In terms of tissue distribution, ubiquitously expressed. Up-regulated in cultured astrocytes treated with dopamine.

Its subcellular location is the nucleus. It carries out the reaction GTP + H2O = GDP + phosphate + H(+). Functionally, zinc chaperone that directly transfers zinc cofactor to target metalloproteins, thereby activating them. Catalyzes zinc insertion into the active site of methionine aminopeptidase METAP1, which function to cleave the initiator methionine from polypeptides during or after protein translation. Mechanistically, the N-terminal psi-PxLVp motif binds to the C6H2-type zinc finger of inactive form of METAP1. After formation of the docked complex, zinc is transferred from the CXCC motif in the GTPase domain of ZNG1A to the zinc binding site in the peptidase domain of METAP1 in a process requiring GTP hydrolysis. GTP/GDP exchange is required for release of active METAP1. The chain is Zinc-regulated GTPase metalloprotein activator 1A from Homo sapiens (Human).